The sequence spans 20 residues: Cytochrome c oxidase subunit 6A2, mitochondrial (20 aa).

Positions 1–20 are disordered; that stretch reads ASGAKGDHGGAGASTXXLLT.

The protein belongs to the cytochrome c oxidase subunit 6A family. Component of the cytochrome c oxidase (complex IV, CIV), a multisubunit enzyme composed of 14 subunits. The complex is composed of a catalytic core of 3 subunits MT-CO1, MT-CO2 and MT-CO3, encoded in the mitochondrial DNA, and 11 supernumerary subunits COX4I, COX5A, COX5B, COX6A, COX6B, COX6C, COX7A, COX7B, COX7C, COX8 and NDUFA4, which are encoded in the nuclear genome. The complex exists as a monomer or a dimer and forms supercomplexes (SCs) in the inner mitochondrial membrane with NADH-ubiquinone oxidoreductase (complex I, CI) and ubiquinol-cytochrome c oxidoreductase (cytochrome b-c1 complex, complex III, CIII), resulting in different assemblies (supercomplex SCI(1)III(2)IV(1) and megacomplex MCI(2)III(2)IV(2)). In terms of tissue distribution, heart specific isoform.

It localises to the mitochondrion inner membrane. The protein operates within energy metabolism; oxidative phosphorylation. Component of the cytochrome c oxidase, the last enzyme in the mitochondrial electron transport chain which drives oxidative phosphorylation. The respiratory chain contains 3 multisubunit complexes succinate dehydrogenase (complex II, CII), ubiquinol-cytochrome c oxidoreductase (cytochrome b-c1 complex, complex III, CIII) and cytochrome c oxidase (complex IV, CIV), that cooperate to transfer electrons derived from NADH and succinate to molecular oxygen, creating an electrochemical gradient over the inner membrane that drives transmembrane transport and the ATP synthase. Cytochrome c oxidase is the component of the respiratory chain that catalyzes the reduction of oxygen to water. Electrons originating from reduced cytochrome c in the intermembrane space (IMS) are transferred via the dinuclear copper A center (CU(A)) of subunit 2 and heme A of subunit 1 to the active site in subunit 1, a binuclear center (BNC) formed by heme A3 and copper B (CU(B)). The BNC reduces molecular oxygen to 2 water molecules unsing 4 electrons from cytochrome c in the IMS and 4 protons from the mitochondrial matrix. Plays a role in the assembly and stabilization of complex IV. This chain is Cytochrome c oxidase subunit 6A2, mitochondrial (COX6A2), found in Canis lupus familiaris (Dog).